The chain runs to 313 residues: Probable myosin light chain kinase DDB_G0292624 (313 aa).

Residues 6–264 form the Protein kinase domain; that stretch reads YELHKEIGKG…AKQALEHPWI (259 aa). ATP contacts are provided by residues 12-20 and Lys-35; that span reads IGKGAFSVV. Asp-125 (proton acceptor) is an active-site residue.

This sequence belongs to the protein kinase superfamily. CAMK Ser/Thr protein kinase family. CaMK subfamily.

It catalyses the reaction L-seryl-[myosin light chain] + ATP = O-phospho-L-seryl-[myosin light chain] + ADP + H(+). The catalysed reaction is L-threonyl-[myosin light chain] + ATP = O-phospho-L-threonyl-[myosin light chain] + ADP + H(+). Does not have a calmodulin-binding domain. In terms of biological role, may phosphorylate a specific serine in the N-terminus of a myosin light chain. The sequence is that of Probable myosin light chain kinase DDB_G0292624 from Dictyostelium discoideum (Social amoeba).